We begin with the raw amino-acid sequence, 235 residues long: Carboxymethylenebutenolidase 2 (235 aa).

Catalysis depends on residues cysteine 117, aspartate 173, and histidine 204.

Belongs to the dienelactone hydrolase family. As to quaternary structure, monomer.

The enzyme catalyses 2-(5-oxo-2,5-dihydrofuran-2-ylidene)acetate + H2O = 4-oxohex-2-enedioate + H(+). Its pathway is aromatic compound metabolism; 3-chlorocatechol degradation. In terms of biological role, ring cleavage of cyclic ester dienelactone to produce maleylacetate. This Cupriavidus pinatubonensis (strain JMP 134 / LMG 1197) (Cupriavidus necator (strain JMP 134)) protein is Carboxymethylenebutenolidase 2 (tfdEII).